The chain runs to 247 residues: 2,3-bisphosphoglycerate-dependent phosphoglycerate mutase (247 aa).

Residues 8 to 15, 21 to 22, arginine 60, 87 to 90, lysine 98, 114 to 115, and 183 to 184 contribute to the substrate site; these read RHGESVWN, TG, ERHY, RR, and GN. Residue histidine 9 is the Tele-phosphohistidine intermediate of the active site. Glutamate 87 serves as the catalytic Proton donor/acceptor.

The protein belongs to the phosphoglycerate mutase family. BPG-dependent PGAM subfamily. Homodimer.

It carries out the reaction (2R)-2-phosphoglycerate = (2R)-3-phosphoglycerate. It functions in the pathway carbohydrate degradation; glycolysis; pyruvate from D-glyceraldehyde 3-phosphate: step 3/5. Its function is as follows. Catalyzes the interconversion of 2-phosphoglycerate and 3-phosphoglycerate. This Geobacter sulfurreducens (strain ATCC 51573 / DSM 12127 / PCA) protein is 2,3-bisphosphoglycerate-dependent phosphoglycerate mutase.